A 430-amino-acid chain; its full sequence is 3-oxo-tetronate kinase (430 aa).

ATP-binding positions include Ser268, 366 to 369 (GGET), and Gly410.

The protein belongs to the four-carbon acid sugar kinase family.

It carries out the reaction 3-dehydro-L-erythronate + ATP = 3-dehydro-4-O-phospho-L-erythronate + ADP + H(+). The enzyme catalyses 3-dehydro-D-erythronate + ATP = 3-dehydro-4-O-phospho-D-erythronate + ADP + H(+). In terms of biological role, catalyzes the ATP-dependent phosphorylation of 3-oxo-tetronate to 3-oxo-tetronate 4-phosphate. In Pseudomonas fluorescens (strain ATCC BAA-477 / NRRL B-23932 / Pf-5), this protein is 3-oxo-tetronate kinase.